A 79-amino-acid polypeptide reads, in one-letter code: Small ribosomal subunit protein bS16 (79 aa).

It belongs to the bacterial ribosomal protein bS16 family.

The polypeptide is Small ribosomal subunit protein bS16 (Solidesulfovibrio magneticus (strain ATCC 700980 / DSM 13731 / RS-1) (Desulfovibrio magneticus)).